A 220-amino-acid chain; its full sequence is uncharacterized protein (220 aa).

The next 4 membrane-spanning stretches (helical) occupy residues 9–29, 54–74, 105–125, and 177–197; these read LWITLAILTLVVMINIHGSTQ, YAVHGMRFFALFFWLVPFLAV, VQGIAFVVLICLPLLTAIHLW, and VLAVILTAVSVYLTLRLVIEM.

It localises to the cell membrane. This is an uncharacterized protein from Sinorhizobium fredii (strain NBRC 101917 / NGR234).